Reading from the N-terminus, the 1090-residue chain is Vinculin (1090 aa).

2 tandem repeats follow at residues 339–446 and 455–561. The segment at 339-561 is 2 X repeats; it reads DADNVTVMRK…LKNALRDLGD (223 aa). Disordered regions lie at residues 811-842 and 864-895; these read GVPM…SQVI and DIPA…EEET. Residues 817-830 show a composition bias toward polar residues; sequence GRHSSYQESISRAS. Residues 866-887 show a composition bias toward pro residues; it reads PAPPRPPPPVELSPPPRPPPPP.

Belongs to the vinculin/alpha-catenin family. As to quaternary structure, may interact with sorb-1. In terms of tissue distribution, expressed in gonadal sheath cells and the spermatheca. Expressed in body wall muscles.

Its subcellular location is the cytoplasm. It is found in the cytoskeleton. It localises to the cell junction. The protein localises to the adherens junction. The protein resides in the cell membrane. Its subcellular location is the focal adhesion. Its function is as follows. Involved in cell adhesion. May be involved in the attachment of the actin-based microfilaments to the plasma membrane. Involved in ovulation. The chain is Vinculin from Caenorhabditis elegans.